Consider the following 326-residue polypeptide: MSHQLTFADSEFSTKRRQTRKEIFLSRMEQILPWQNMTAVIEPFYPKAGNGRRPYPLETMLRIHCMQHWYNLSDGAMEDALYEIASMRLFARLSLDSALPDRTTIMNFRHLLEQHQLARQLFKTINRWLAEAGVMMTQGTLVDATIIEAPSSTKNKEQQRDPEMHQTKKGNQWHFGMKAHIGVDAKSGLTHSLVTTAANEHDLNQLGNLLHGEEQFVSADAGYQGAPQREELAEVDVDWLIAERPGKVKTLKQNPRKNKTAINIEYMKASIRARVEHPFRIIKRQFGFVKARYKGLLKNDNQLAMLFTLANLFRVDQMIRQWERSQ.

The protein belongs to the transposase 11 family.

Its function is as follows. Involved in the transposition of the insertion sequence IS5. The polypeptide is Transposase InsH for insertion sequence element IS5Y (insH5) (Escherichia coli (strain K12)).